The sequence spans 1086 residues: DNA polymerase (1086 aa).

Positions 638 to 657 (STTRKPVDDVEEHSECNGFT) are disordered.

The protein belongs to the DNA polymerase type-B family.

The catalysed reaction is DNA(n) + a 2'-deoxyribonucleoside 5'-triphosphate = DNA(n+1) + diphosphate. Its function is as follows. Replicates the viral genome. Host DNA polymerases cannot substitute for the viral enzyme in this process. The protein is DNA polymerase of Noctuidae (owlet moths).